A 278-amino-acid polypeptide reads, in one-letter code: Undecaprenyl-diphosphatase 2 (278 aa).

The next 7 membrane-spanning stretches (helical) occupy residues 1 to 21 (MSII…FLPI), 38 to 58 (FPGF…VILY), 85 to 105 (FMFA…GLLL), 118 to 138 (FIAG…RFFV), 191 to 211 (SFLL…GDLL), 223 to 243 (PLII…IWLI), and 251 to 271 (LIYF…YFDH).

The protein belongs to the UppP family.

Its subcellular location is the cell membrane. It carries out the reaction di-trans,octa-cis-undecaprenyl diphosphate + H2O = di-trans,octa-cis-undecaprenyl phosphate + phosphate + H(+). Catalyzes the dephosphorylation of undecaprenyl diphosphate (UPP). Confers resistance to bacitracin. The protein is Undecaprenyl-diphosphatase 2 of Halalkalibacterium halodurans (strain ATCC BAA-125 / DSM 18197 / FERM 7344 / JCM 9153 / C-125) (Bacillus halodurans).